The primary structure comprises 558 residues: DNA ligase B (558 aa).

K126 functions as the N6-AMP-lysine intermediate in the catalytic mechanism.

The protein belongs to the NAD-dependent DNA ligase family. LigB subfamily.

The catalysed reaction is NAD(+) + (deoxyribonucleotide)n-3'-hydroxyl + 5'-phospho-(deoxyribonucleotide)m = (deoxyribonucleotide)n+m + AMP + beta-nicotinamide D-nucleotide.. Catalyzes the formation of phosphodiester linkages between 5'-phosphoryl and 3'-hydroxyl groups in double-stranded DNA using NAD as a coenzyme and as the energy source for the reaction. The sequence is that of DNA ligase B from Pseudomonas fluorescens (strain Pf0-1).